Here is a 90-residue protein sequence, read N- to C-terminus: Probable Fe(2+)-trafficking protein (90 aa).

It belongs to the Fe(2+)-trafficking protein family.

Its function is as follows. Could be a mediator in iron transactions between iron acquisition and iron-requiring processes, such as synthesis and/or repair of Fe-S clusters in biosynthetic enzymes. The sequence is that of Probable Fe(2+)-trafficking protein from Aeromonas hydrophila subsp. hydrophila (strain ATCC 7966 / DSM 30187 / BCRC 13018 / CCUG 14551 / JCM 1027 / KCTC 2358 / NCIMB 9240 / NCTC 8049).